A 134-amino-acid chain; its full sequence is Small ribosomal subunit protein uS8 (134 aa).

It belongs to the universal ribosomal protein uS8 family. In terms of assembly, part of the 30S ribosomal subunit. Contacts proteins S5 and S12.

One of the primary rRNA binding proteins, it binds directly to 16S rRNA central domain where it helps coordinate assembly of the platform of the 30S subunit. The sequence is that of Small ribosomal subunit protein uS8 from Pseudothermotoga lettingae (strain ATCC BAA-301 / DSM 14385 / NBRC 107922 / TMO) (Thermotoga lettingae).